Here is a 254-residue protein sequence, read N- to C-terminus: uncharacterized protein (254 aa).

This is an uncharacterized protein from Aedes vexans (Inland floodwater mosquito).